A 569-amino-acid chain; its full sequence is Urease subunit beta (569 aa).

Residues 131–569 (GGIDTHIHFI…VSLAQLFSIF (439 aa)) form the Urease domain. Ni(2+) contacts are provided by His136, His138, and Lys219. Position 219 is an N6-carboxylysine (Lys219). His221 is a binding site for substrate. Residues His248 and His274 each coordinate Ni(2+). His322 (proton donor) is an active-site residue. Ni(2+) is bound at residue Asp362.

The protein belongs to the metallo-dependent hydrolases superfamily. Urease alpha subunit family. In terms of assembly, heterohexamer of 3 UreA (alpha) and 3 UreB (beta) subunits. Ni cation serves as cofactor. Carboxylation allows a single lysine to coordinate two nickel ions.

The protein localises to the cytoplasm. The catalysed reaction is urea + 2 H2O + H(+) = hydrogencarbonate + 2 NH4(+). Its pathway is nitrogen metabolism; urea degradation; CO(2) and NH(3) from urea (urease route): step 1/1. The chain is Urease subunit beta from Helicobacter pylori (strain Shi470).